Here is a 320-residue protein sequence, read N- to C-terminus: Ferrochelatase (320 aa).

Residues H194 and E275 each coordinate Fe cation.

This sequence belongs to the ferrochelatase family. As to quaternary structure, monomer.

Its subcellular location is the cytoplasm. The enzyme catalyses heme b + 2 H(+) = protoporphyrin IX + Fe(2+). Its pathway is porphyrin-containing compound metabolism; protoheme biosynthesis; protoheme from protoporphyrin-IX: step 1/1. Functionally, catalyzes the ferrous insertion into protoporphyrin IX. The protein is Ferrochelatase of Salmonella paratyphi A (strain ATCC 9150 / SARB42).